Consider the following 741-residue polypeptide: Transketolase-1, chloroplastic (741 aa).

The N-terminal 66 residues, 1-66 (MASTSSLALS…NRSLRPLVRA (66 aa)), are a transit peptide targeting the chloroplast. Residues 22-51 (GSDQRGSLPAFSGLKSTGSRASASSRRRIA) form a disordered region. An N-acetylalanine modification is found at alanine 67. Residue histidine 103 coordinates substrate. Thiamine diphosphate is bound by residues histidine 143 and 192–194 (GPL). Residue aspartate 233 participates in Mg(2+) binding. Thiamine diphosphate-binding residues include glycine 234 and asparagine 263. Residues asparagine 263 and isoleucine 265 each coordinate Mg(2+). Histidine 340 contacts substrate. Position 340 (histidine 340) interacts with thiamine diphosphate. Residue serine 428 is modified to Phosphoserine. Positions 434 and 461 each coordinate substrate. Residues glutamate 488 and phenylalanine 515 each coordinate thiamine diphosphate. The active-site Proton donor is the glutamate 488. 3 residues coordinate substrate: histidine 539, aspartate 547, and arginine 598.

It belongs to the transketolase family. In terms of assembly, homodimer. The cofactor is Mg(2+). Ca(2+) serves as cofactor. Requires Mn(2+) as cofactor. Co(2+) is required as a cofactor. It depends on thiamine diphosphate as a cofactor.

It is found in the plastid. The protein resides in the chloroplast stroma. It carries out the reaction D-sedoheptulose 7-phosphate + D-glyceraldehyde 3-phosphate = aldehydo-D-ribose 5-phosphate + D-xylulose 5-phosphate. It participates in carbohydrate biosynthesis; Calvin cycle. Catalyzes the reversible transfer of a two-carbon ketol group from fructose-6-phosphate or sedoheptulose-7-phosphate to glyceraldehyde-3-phosphate to yield xylulose-5-phosphate and erythrose-4-phosphate or ribose-5-phosphate, respectively. Could act as a stress sensor involved in adaptation process. The polypeptide is Transketolase-1, chloroplastic (TKL-1) (Arabidopsis thaliana (Mouse-ear cress)).